A 356-amino-acid chain; its full sequence is UDP-N-acetylglucosamine--N-acetylmuramyl-(pentapeptide) pyrophosphoryl-undecaprenol N-acetylglucosamine transferase (356 aa).

Residues Thr11–Gly13, Asn123, Arg159, and Ser192 contribute to the UDP-N-acetyl-alpha-D-glucosamine site.

This sequence belongs to the glycosyltransferase 28 family. MurG subfamily.

It localises to the cell membrane. The enzyme catalyses di-trans,octa-cis-undecaprenyl diphospho-N-acetyl-alpha-D-muramoyl-L-alanyl-D-glutamyl-meso-2,6-diaminopimeloyl-D-alanyl-D-alanine + UDP-N-acetyl-alpha-D-glucosamine = di-trans,octa-cis-undecaprenyl diphospho-[N-acetyl-alpha-D-glucosaminyl-(1-&gt;4)]-N-acetyl-alpha-D-muramoyl-L-alanyl-D-glutamyl-meso-2,6-diaminopimeloyl-D-alanyl-D-alanine + UDP + H(+). The protein operates within cell wall biogenesis; peptidoglycan biosynthesis. Its function is as follows. Cell wall formation. Catalyzes the transfer of a GlcNAc subunit on undecaprenyl-pyrophosphoryl-MurNAc-pentapeptide (lipid intermediate I) to form undecaprenyl-pyrophosphoryl-MurNAc-(pentapeptide)GlcNAc (lipid intermediate II). This Tropheryma whipplei (strain Twist) (Whipple's bacillus) protein is UDP-N-acetylglucosamine--N-acetylmuramyl-(pentapeptide) pyrophosphoryl-undecaprenol N-acetylglucosamine transferase.